The primary structure comprises 361 residues: Peptide chain release factor 1 (361 aa).

Residue Gln235 is modified to N5-methylglutamine.

Belongs to the prokaryotic/mitochondrial release factor family. In terms of processing, methylated by PrmC. Methylation increases the termination efficiency of RF1.

It localises to the cytoplasm. Peptide chain release factor 1 directs the termination of translation in response to the peptide chain termination codons UAG and UAA. This Xanthomonas campestris pv. campestris (strain B100) protein is Peptide chain release factor 1.